A 335-amino-acid polypeptide reads, in one-letter code: Tryptophan--tRNA ligase (335 aa).

Residues 13–15 (QPS) and 21–22 (GN) contribute to the ATP site. Residues 14-22 (PSGNLTIGN) carry the 'HIGH' region motif. Residue Asp136 participates in L-tryptophan binding. ATP is bound by residues 148–150 (GQD), Ile187, and 196–200 (KMSKS). Positions 196–200 (KMSKS) match the 'KMSKS' region motif.

The protein belongs to the class-I aminoacyl-tRNA synthetase family. Homodimer.

It is found in the cytoplasm. It carries out the reaction tRNA(Trp) + L-tryptophan + ATP = L-tryptophyl-tRNA(Trp) + AMP + diphosphate + H(+). Its function is as follows. Catalyzes the attachment of tryptophan to tRNA(Trp). This is Tryptophan--tRNA ligase from Buchnera aphidicola subsp. Acyrthosiphon pisum (strain APS) (Acyrthosiphon pisum symbiotic bacterium).